The following is a 689-amino-acid chain: Histone-lysine N-methyltransferase MEDEA (689 aa).

Disordered stretches follow at residues 1-20 (MEKENHEDDGEGLPPELNQI), 51-73 (HQSFDLNQPAAEDDNGGDNKSLL), and 169-188 (ELSSEEDEEDEEEDEEEIKK). The interval 1–109 (MEKENHEDDG…DEDQDYALEE (109 aa)) is interaction with FIE. The segment covering 171-184 (SSEEDEEDEEEDEE) has biased composition (acidic residues). The 51-residue stretch at 339-389 (NNTMWTPVEKDLYLKGIEIFGRNSCDVALNILRGLKTCLEIYNYMREQDQC) folds into the SANT domain. The CXC domain occupies 428-532 (RYPPALKKTT…TLGETPVQIQ (105 aa)). Residues 544-659 (KKILIGKSDV…EGEELFFDYC (116 aa)) form the SET domain. Residues 666 to 689 (DWSRGREPRKTGASKRSKEARPAR) are disordered.

The protein belongs to the class V-like SAM-binding methyltransferase superfamily. Histone-lysine methyltransferase family. EZ subfamily. In terms of assembly, interacts directly with FIE via its N-terminal domain. These two proteins are probably indirectly associated with FIS2. In plants, PcG complexes are probably composed of a member of the EZ family (CLF or MEA), FIE, and a member of the VEFS family (FIS2, VRN2 or EMF2). Interacts with TAF13. Expressed in unpollinated siliques that contain maturing gametophytes. Not expressed at early stages of floral development during early megagametogenesis.

Its subcellular location is the nucleus. It catalyses the reaction L-lysyl(27)-[histone H3] + 3 S-adenosyl-L-methionine = N(6),N(6),N(6)-trimethyl-L-lysyl(27)-[histone H3] + 3 S-adenosyl-L-homocysteine + 3 H(+). Polycomb group (PcG) protein. Catalytic subunit of some PcG multiprotein complex, which methylates 'Lys-27' of histone H3, leading to transcriptional repression of the affected target genes. Required to prevent the proliferation of the central cell of the female gametophyte by repressing target genes before fertilization. After fertilization, it probably also regulates the embryo and endosperm proliferation and anteroposterior organization during seed development. PcG proteins act by forming multiprotein complexes, which are required to maintain the transcriptionally repressive state of homeotic genes throughout development. PcG proteins are not required to initiate repression, but to maintain it during later stages of development. Interacts with the promoter and repress the transcription of genes such as PHE1 and PHE2, that are paternally active and maternally silenced genes. This chain is Histone-lysine N-methyltransferase MEDEA (MEA), found in Arabidopsis thaliana (Mouse-ear cress).